Here is a 302-residue protein sequence, read N- to C-terminus: Cyclin-dependent kinase 1-B (302 aa).

One can recognise a Protein kinase domain in the interval 4-287 (YTKIEKIGEG…ARKAMLHPYF (284 aa)). ATP is bound by residues 10–18 (IGEGTYGVV) and K33. Residue T14 is modified to Phosphothreonine. Position 15 is a phosphotyrosine; by wee1 and wee2 (Y15). The Proton acceptor role is filled by D128. T161 is modified (phosphothreonine; by cak). S277 bears the Phosphoserine mark.

The protein belongs to the protein kinase superfamily. CMGC Ser/Thr protein kinase family. CDC2/CDKX subfamily. As to quaternary structure, forms a stable but non-covalent complex with a regulatory subunit and with a cyclin. Interacts with spdya. Phosphorylation at Tyr-15 by wee1 and wee2 inhibits the protein kinase activity and acts negative regulator of entry into mitosis (G2 to M transition).

The protein localises to the nucleus. The catalysed reaction is L-seryl-[protein] + ATP = O-phospho-L-seryl-[protein] + ADP + H(+). It catalyses the reaction L-threonyl-[protein] + ATP = O-phospho-L-threonyl-[protein] + ADP + H(+). It carries out the reaction [DNA-directed RNA polymerase] + ATP = phospho-[DNA-directed RNA polymerase] + ADP + H(+). Phosphorylation at Thr-14 or Tyr-15 inactivates the enzyme, while phosphorylation at Thr-161 activates it. Functionally, plays a key role in the control of the eukaryotic cell cycle by modulating the centrosome cycle as well as mitotic onset; promotes G2-M transition via association with multiple interphase cyclins. During G2 and early mitosis, CDC25A/B/C-mediated dephosphorylation activates CDK1/cyclin complexes which phosphorylate several substrates that trigger at least centrosome separation, Golgi dynamics, nuclear envelope breakdown and chromosome condensation. Once chromosomes are condensed and aligned at the metaphase plate, CDK1 activity is switched off by WEE1- and PKMYT1-mediated phosphorylation to allow sister chromatid separation, chromosome decondensation, reformation of the nuclear envelope and cytokinesis. Catalyzes lamin (LMNA, LMNB1 and LMNB2) phosphorylation at the onset of mitosis, promoting nuclear envelope breakdown. The polypeptide is Cyclin-dependent kinase 1-B (cdk1-b) (Xenopus laevis (African clawed frog)).